A 565-amino-acid polypeptide reads, in one-letter code: NAD-dependent malic enzyme (565 aa).

Residue Y104 is the Proton donor of the active site. Residue R157 coordinates NAD(+). The active-site Proton acceptor is the K175. Residues E246, D247, and D270 each coordinate a divalent metal cation. Positions 270 and 418 each coordinate NAD(+).

Belongs to the malic enzymes family. Homotetramer. The cofactor is Mg(2+). Mn(2+) serves as cofactor.

The catalysed reaction is (S)-malate + NAD(+) = pyruvate + CO2 + NADH. It carries out the reaction oxaloacetate + H(+) = pyruvate + CO2. This chain is NAD-dependent malic enzyme, found in Escherichia coli O139:H28 (strain E24377A / ETEC).